Reading from the N-terminus, the 123-residue chain is Large ribosomal subunit protein uL14 (123 aa).

The protein belongs to the universal ribosomal protein uL14 family. Part of the 50S ribosomal subunit. Forms a cluster with proteins L3 and L19. In the 70S ribosome, L14 and L19 interact and together make contacts with the 16S rRNA in bridges B5 and B8.

Functionally, binds to 23S rRNA. Forms part of two intersubunit bridges in the 70S ribosome. This Vibrio vulnificus (strain CMCP6) protein is Large ribosomal subunit protein uL14.